The primary structure comprises 779 residues: Probable glutamine--tRNA ligase (779 aa).

Residues 268–270 (EPN) and 274–280 (HIGHAKA) each bind ATP. L-glutamine contacts are provided by D300 and Y440. Residues T459, 488-489 (RL), and 496-498 (LSK) contribute to the ATP site.

The protein belongs to the class-I aminoacyl-tRNA synthetase family.

It catalyses the reaction tRNA(Gln) + L-glutamine + ATP = L-glutaminyl-tRNA(Gln) + AMP + diphosphate. In Dictyostelium discoideum (Social amoeba), this protein is Probable glutamine--tRNA ligase (glnS).